Here is an 89-residue protein sequence, read N- to C-terminus: Small ribosomal subunit protein uS15 (89 aa).

Belongs to the universal ribosomal protein uS15 family. Part of the 30S ribosomal subunit. Forms a bridge to the 50S subunit in the 70S ribosome, contacting the 23S rRNA.

One of the primary rRNA binding proteins, it binds directly to 16S rRNA where it helps nucleate assembly of the platform of the 30S subunit by binding and bridging several RNA helices of the 16S rRNA. Its function is as follows. Forms an intersubunit bridge (bridge B4) with the 23S rRNA of the 50S subunit in the ribosome. In Beutenbergia cavernae (strain ATCC BAA-8 / DSM 12333 / CCUG 43141 / JCM 11478 / NBRC 16432 / NCIMB 13614 / HKI 0122), this protein is Small ribosomal subunit protein uS15.